Reading from the N-terminus, the 231-residue chain is mRNA-decapping enzyme subunit 1 (231 aa).

The interval 92–120 (QNGSNNIQVNNGSDNSNRNSSGNGNSYKS) is disordered. Residues 101-120 (NNGSDNSNRNSSGNGNSYKS) are compositionally biased toward low complexity.

It belongs to the DCP1 family. In terms of assembly, component of the decapping complex composed of DCP1 and DCP2. Interacts with mRNAs, DHH1, LSM1, LSM2, LSM3, LSM4, LSM5, LSM6, LSM7, and the cap-binding proteins PAB1 and TIF4632/eIF-4G. Post-translationally, phosphorylated.

It is found in the cytoplasm. Its subcellular location is the P-body. In terms of biological role, component of the decapping complex necessary for the degradation of mRNAs, both in normal mRNA turnover and in nonsense-mediated mRNA decay. Removes the 7-methyl guanine cap structure from mRNA molecules, yielding a 5'-phosphorylated mRNA fragment and 7m-GDP. Decapping is the major pathway of mRNA degradation in yeast. It occurs through deadenylation, decapping and subsequent 5' to 3' exonucleolytic decay of the transcript body. DCP1 is activated by the DEAD-box helicase DHH1 and destabilizes the eIF-4F cap-binding complex from the mRNA. The sequence is that of mRNA-decapping enzyme subunit 1 (DCP1) from Saccharomyces cerevisiae (strain ATCC 204508 / S288c) (Baker's yeast).